We begin with the raw amino-acid sequence, 278 residues long: MSLQELCRKNLPDCELPEFFDDYVLQLLGLHWQDHGSLQRTGKNQVLVQQEPIHINEALKSAASEGNYEIVELLLSWEADPRYAVVGALESNYYDLVHKYYDQVKDCHDMLPLIQNPEMFEKCHELNNTCSLKCLFKHAVIHDMLPILQKYSDYLDGWQYCNQILFELACKRQKYNMVVWIEGVLGVGNFKILFTIAINNRDLQLYSLGYLIILERLYSCGQDPTFLLNHFLRDVSMKGLLPFVLKTIEFGGSKEIAITLAKKYQHKHILKYFETEEC.

The protein belongs to the asfivirus MGF 505 family.

Functionally, plays a role in virus cell tropism, and may be required for efficient virus replication in macrophages. In African swine fever virus (isolate Tick/Malawi/Lil 20-1/1983) (ASFV), this protein is Protein MGF 505-3R.